Consider the following 785-residue polypeptide: MADLDSPPKLSGVQQPSEGVGGGRCSEISAELIRSLTELQELEAVYERLCGEEKVVERELDALLEQQNTIESKMVTLHRMGPNLQLIEGDAKQLAGMITFTCNLAENVSSKVRQLDLAKNRLYQAIQRADDILDLKFCMDGVQTALRSEDYEQAAAHTHRYLCLDKSVIELSRQGKEGSMIDANLKLLQEAEQRLKAIVAEKFAIATKEGDLPQVERFFKIFPLLGLHEEGLRKFSEYLCKQVASKAEENLLMVLGTDMSDRRAAVIFADTLTLLFEGIARIVETHQPIVETYYGPGRLYTLIKYLQVECDRQVEKVVDKFIKQRDYHQQFRHVQNNLMRNSTTEKIEPRELDPILTEVTLMNARSELYLRFLKKRISSDFEVGDSMASEEVKQEHQKCLDKLLNNCLLSCTMQELIGLYVTMEEYFMRETVNKAVALDTYEKGQLTSSMVDDVFYIVKKCIGRALSSSSIDCLCAMINLATTELESDFRDVLCNKLRMGFPATTFQDIQRGVTSAVNIMHSSLQQGKFDTKGIESTDEAKMSFLVTLNNVEVCSENISTLKKTLESDCTKLFSQGIGGEQAQAKFDSCLSDLAAVSNKFRDLLQEGLTELNSTAIKPQVQPWINSFFSVSHNIEEEEFNDYEANDPWVQQFILNLEQQMAEFKASLSPVIYDSLTGLMTSLVAVELEKVVLKSTFNRLGGLQFDKELRSLIAYLTTVTTWTIRDKFARLSQMATILNLERVTEILDYWGPNSGPLTWRLTPAEVRQVLALRIDFRSEDIKRLRL.

Positions 1 to 24 (MADLDSPPKLSGVQQPSEGVGGGR) are disordered. Ala2 is subject to N-acetylalanine. Residues 2–84 (ADLDSPPKLS…VTLHRMGPNL (83 aa)) form an interaction with SCFD1 region. Ser6 bears the Phosphoserine mark. The interval 85–153 (QLIEGDAKQL…TALRSEDYEQ (69 aa)) is interaction with STX5. The segment at 618-740 (PQVQPWINSF…SQMATILNLE (123 aa)) is d domain. An e domain; essential for proper cell surface glycosylation region spans residues 741-785 (RVTEILDYWGPNSGPLTWRLTPAEVRQVLALRIDFRSEDIKRLRL).

This sequence belongs to the COG4 family. As to quaternary structure, monomer. Component of the conserved oligomeric Golgi (COG) complex which is composed of eight different subunits and is required for normal Golgi morphology and localization. Mediates interaction of SCFD1 with the COG complex. Interacts with STX5.

It is found in the cytoplasm. It localises to the cytosol. The protein resides in the golgi apparatus membrane. In terms of biological role, required for normal Golgi function. Plays a role in SNARE-pin assembly and Golgi-to-ER retrograde transport via its interaction with SCFD1. This is Conserved oligomeric Golgi complex subunit 4 (COG4) from Homo sapiens (Human).